The primary structure comprises 354 residues: Putrescine/cadaverine-binding protein (354 aa).

An N-terminal signal peptide occupies residues 1 to 20 (MMKKLLLVATLMAGAAQATA).

This sequence belongs to the bacterial solute-binding protein 1 family.

The protein resides in the periplasm. In terms of biological role, binds putrescine and cadaverine. This Pseudomonas aeruginosa (strain ATCC 15692 / DSM 22644 / CIP 104116 / JCM 14847 / LMG 12228 / 1C / PRS 101 / PAO1) protein is Putrescine/cadaverine-binding protein.